The chain runs to 135 residues: Ribonuclease P protein component (135 aa).

It belongs to the RnpA family. As to quaternary structure, consists of a catalytic RNA component (M1 or rnpB) and a protein subunit.

The enzyme catalyses Endonucleolytic cleavage of RNA, removing 5'-extranucleotides from tRNA precursor.. Functionally, RNaseP catalyzes the removal of the 5'-leader sequence from pre-tRNA to produce the mature 5'-terminus. It can also cleave other RNA substrates such as 4.5S RNA. The protein component plays an auxiliary but essential role in vivo by binding to the 5'-leader sequence and broadening the substrate specificity of the ribozyme. This is Ribonuclease P protein component from Pseudomonas paraeruginosa (strain DSM 24068 / PA7) (Pseudomonas aeruginosa (strain PA7)).